Here is a 700-residue protein sequence, read N- to C-terminus: Elongation factor G 1 (700 aa).

In terms of domain architecture, tr-type G spans 8–290; that stretch reads ERYRNIGISA…AVIDYLPSPA (283 aa). Residues 17 to 24, 88 to 92, and 142 to 145 each bind GTP; these read AHIDAGKT, DTPGH, and NKMD.

The protein belongs to the TRAFAC class translation factor GTPase superfamily. Classic translation factor GTPase family. EF-G/EF-2 subfamily.

It localises to the cytoplasm. Catalyzes the GTP-dependent ribosomal translocation step during translation elongation. During this step, the ribosome changes from the pre-translocational (PRE) to the post-translocational (POST) state as the newly formed A-site-bound peptidyl-tRNA and P-site-bound deacylated tRNA move to the P and E sites, respectively. Catalyzes the coordinated movement of the two tRNA molecules, the mRNA and conformational changes in the ribosome. The chain is Elongation factor G 1 from Bordetella parapertussis (strain 12822 / ATCC BAA-587 / NCTC 13253).